The sequence spans 307 residues: Agmatinase (307 aa).

Mn(2+)-binding residues include histidine 128, aspartate 151, histidine 153, aspartate 155, aspartate 232, and aspartate 234.

This sequence belongs to the arginase family. Agmatinase subfamily. Requires Mn(2+) as cofactor.

The catalysed reaction is agmatine + H2O = urea + putrescine. It participates in amine and polyamine biosynthesis; putrescine biosynthesis via agmatine pathway; putrescine from agmatine: step 1/1. In terms of biological role, catalyzes the formation of putrescine from agmatine. The polypeptide is Agmatinase (Neisseria meningitidis serogroup A / serotype 4A (strain DSM 15465 / Z2491)).